Consider the following 71-residue polypeptide: Protein PSY3 (71 aa).

A signal peptide spans 1 to 25; that stretch reads MGYSSSSRIGLCLFLFFTFALLSSA. The propeptide occupies 26-49; that stretch reads RISLSFSENEMTVVPERSLMVSTN. Residues 47-71 are disordered; it reads STNDYSDPTANGRHDPPRGGRGRRR. Y51 bears the Sulfotyrosine mark. P63 bears the 4-hydroxyproline mark. O-linked (Ara...) hydroxyproline glycosylation is present at P63. A propeptide spanning residues 66–71 is cleaved from the precursor; that stretch reads GRGRRR.

The protein belongs to the sulfated-peptide plant hormone family. The sulfation and the glycosylation are required for full activity.

It localises to the secreted. In terms of biological role, promotes cellular proliferation and expansion. The protein is Protein PSY3 (PSY3) of Arabidopsis thaliana (Mouse-ear cress).